The sequence spans 1074 residues: Calcium-transporting ATPase 8, plasma membrane-type (1074 aa).

The disordered stretch occupies residues 1–33 (MTSLLKSSPGRRRGGDVESGKSEHADSDSDTFY). At 1 to 180 (MTSLLKSSPG…NTYPRKKGKG (180 aa)) the chain is on the cytoplasmic side. Positions 13–27 (RGGDVESGKSEHADS) are enriched in basic and acidic residues. An interaction with calmodulin region spans residues 43–54 (RLQQWRKAALVL). Residues 181 to 201 (FLRFLWDACHDLTLIILMVAA) traverse the membrane as a helical segment. Residues 202–219 (VASLALGIKTEGIKEGWY) lie on the Extracellular side of the membrane. A helical membrane pass occupies residues 220-240 (DGGSIAFAVILVIVVTAVSDY). Over 241-369 (KQSLQFQNLN…GEETPLQVRL (129 aa)) the chain is Cytoplasmic. A helical transmembrane segment spans residues 370 to 389 (NGVATFIGSIGLAVAAAVLV). The Extracellular portion of the chain corresponds to 390-426 (ILLTRYFTGHTKDNNGGPQFVKGKTKVGHVIDDVVKV). A helical membrane pass occupies residues 427-444 (LTVAVTIVVVAVPEGLPL). Residues 445–840 (AVTLTLAYSM…RWGRSVYANI (396 aa)) lie on the Cytoplasmic side of the membrane. The active-site 4-aspartylphosphate intermediate is the Asp482. Mg(2+)-binding residues include Asp785 and Asp789. Residues 841 to 859 (QKFIQFQLTVNVAALVINV) form a helical membrane-spanning segment. Over 860–870 (VAAISSGDVPL) the chain is Extracellular. The chain crosses the membrane as a helical span at residues 871–891 (TAVQLLWVNLIMDTLGALALA). Residues 892-911 (TEPPTDHLMGRPPVGRKEPL) lie on the Cytoplasmic side of the membrane. The helical transmembrane segment at 912-934 (ITNIMWRNLLIQAIYQVSVLLTL) threads the bilayer. Residues 935 to 949 (NFRGISILGLEHEVH) are Extracellular-facing. The helical transmembrane segment at 950 to 971 (EHATRVKNTIIFNAFVLCQAFN) threads the bilayer. Over 972 to 989 (EFNARKPDEKNIFKGVIK) the chain is Cytoplasmic. The chain crosses the membrane as a helical span at residues 990–1011 (NRLFMGIIVITLVLQVIIVEFL). Residues 1012–1021 (GKFASTTKLN) are Extracellular-facing. The chain crosses the membrane as a helical span at residues 1022 to 1043 (WKQWLICVGIGVISWPLALVGK). At 1044–1074 (FIPVPAAPISNKLKVLKFWGKKKNSSGEGSL) the chain is on the cytoplasmic side.

It belongs to the cation transport ATPase (P-type) (TC 3.A.3) family. Type IIB subfamily.

It is found in the cell membrane. The enzyme catalyses Ca(2+)(in) + ATP + H2O = Ca(2+)(out) + ADP + phosphate + H(+). Activated by calmodulin. Its function is as follows. This magnesium-dependent enzyme catalyzes the hydrolysis of ATP coupled with the translocation of calcium from the cytosol out of the cell. This is Calcium-transporting ATPase 8, plasma membrane-type (ACA8) from Arabidopsis thaliana (Mouse-ear cress).